The sequence spans 322 residues: D-specific alpha-keto acid dehydrogenase (322 aa).

NAD(+) is bound by residues 156–157 (QI), 229–231 (TGR), and aspartate 255. Arginine 231 is an active-site residue. Residue glutamate 260 is part of the active site. Catalysis depends on histidine 292, which acts as the Proton donor. An NAD(+)-binding site is contributed by 292 to 295 (HTAY).

This sequence belongs to the D-isomer specific 2-hydroxyacid dehydrogenase family.

It catalyses the reaction a (2R)-2-hydroxycarboxylate + NADP(+) = a 2-oxocarboxylate + NADPH + H(+). It carries out the reaction a (2R)-2-hydroxycarboxylate + NAD(+) = a 2-oxocarboxylate + NADH + H(+). The enzyme catalyses (R)-lactate + NADP(+) = pyruvate + NADPH + H(+). The catalysed reaction is (R)-lactate + NAD(+) = pyruvate + NADH + H(+). It catalyses the reaction (2R)-hydroxybutanoate + NADP(+) = 2-oxobutanoate + NADPH + H(+). In terms of biological role, required for high-level resistance to glycopeptide antibiotics. Catalyzes the reduction of 2-keto acids to 2-D-hydroxy acids, exhibiting highest catalytic efficiency with pyruvate and 2-oxobutanoate/alpha-ketobutyrate as substrates, producing D-lactate and (2R)-hydroxybutanoate, respectively. Together with D-alanine--D-lactate ligase VanA, gives rise to peptidoglycan precursors that terminate in the depsipeptide D-alanine-D-lactate rather than the dipeptide D-alanine-D-alanine thus preventing vancomycin binding. Shows a slight preference for NADPH over NADH as the electron donor. This chain is D-specific alpha-keto acid dehydrogenase, found in Enterococcus faecium (Streptococcus faecium).